We begin with the raw amino-acid sequence, 71 residues long: Large ribosomal subunit protein uL29 (71 aa).

The protein belongs to the universal ribosomal protein uL29 family.

This Rickettsia africae (strain ESF-5) protein is Large ribosomal subunit protein uL29.